The sequence spans 396 residues: Protein GTS1 (396 aa).

An Arf-GAP domain is found at 14-141 (DRELKELINS…FRYDEIKPED (128 aa)). The C4-type zinc-finger motif lies at 30 to 53 (CGECGNFYPTWCSVNLGVFLCGRC). Residues 148–161 (DFDGESDRFDERNR) show a composition bias toward basic and acidic residues. Disordered stretches follow at residues 148 to 194 (DFDG…SGSR) and 233 to 266 (KSSSSRNSVSAAATTSTPPLPRRRATTSGPQPAI). Phosphoserine is present on Ser-153. Tyr-181 carries the post-translational modification Phosphotyrosine. Residues Ser-184 and Ser-187 each carry the phosphoserine modification. The 42-residue stretch at 193 to 234 (SRYSRQLAELKDMGFGDTNKNLDALSSAHGNINRAIDYLEKS) folds into the UBA domain. Residues 234 to 249 (SSSSRNSVSAAATTST) are compositionally biased toward low complexity. Position 240 is a phosphoserine (Ser-240). Thr-249 is modified (phosphothreonine).

The protein localises to the nucleus. In terms of biological role, appears to modulate the timing of budding to obtain an appropriate cell size independent of the DNA replication cycle. Transcription factor involved in both heat resistance and flocculation. The chain is Protein GTS1 (GTS1) from Saccharomyces cerevisiae (strain ATCC 204508 / S288c) (Baker's yeast).